The chain runs to 393 residues: Formate-dependent phosphoribosylglycinamide formyltransferase (393 aa).

N(1)-(5-phospho-beta-D-ribosyl)glycinamide contacts are provided by residues 22-23 (EL) and E82. ATP-binding positions include R114, K155, 160 to 165 (SSGKGQ), 195 to 198 (ESFV), and E203. The 190-residue stretch at 119–308 (RLAAEELGLR…EFALHVRAVL (190 aa)) folds into the ATP-grasp domain. Mg(2+)-binding residues include E267 and E279. Residues D286, K356, and 363–364 (RR) each bind N(1)-(5-phospho-beta-D-ribosyl)glycinamide.

This sequence belongs to the PurK/PurT family. In terms of assembly, homodimer.

The catalysed reaction is N(1)-(5-phospho-beta-D-ribosyl)glycinamide + formate + ATP = N(2)-formyl-N(1)-(5-phospho-beta-D-ribosyl)glycinamide + ADP + phosphate + H(+). Its pathway is purine metabolism; IMP biosynthesis via de novo pathway; N(2)-formyl-N(1)-(5-phospho-D-ribosyl)glycinamide from N(1)-(5-phospho-D-ribosyl)glycinamide (formate route): step 1/1. Involved in the de novo purine biosynthesis. Catalyzes the transfer of formate to 5-phospho-ribosyl-glycinamide (GAR), producing 5-phospho-ribosyl-N-formylglycinamide (FGAR). Formate is provided by PurU via hydrolysis of 10-formyl-tetrahydrofolate. The protein is Formate-dependent phosphoribosylglycinamide formyltransferase of Oleidesulfovibrio alaskensis (strain ATCC BAA-1058 / DSM 17464 / G20) (Desulfovibrio alaskensis).